The primary structure comprises 284 residues: NAD kinase (284 aa).

Asp67 acts as the Proton acceptor in catalysis. NAD(+) is bound by residues 67 to 68 (DG), 141 to 142 (ND), Arg152, Lys169, Asp171, 182 to 187 (TGYSLS), and Gln241.

It belongs to the NAD kinase family. Requires a divalent metal cation as cofactor.

Its subcellular location is the cytoplasm. It carries out the reaction NAD(+) + ATP = ADP + NADP(+) + H(+). In terms of biological role, involved in the regulation of the intracellular balance of NAD and NADP, and is a key enzyme in the biosynthesis of NADP. Catalyzes specifically the phosphorylation on 2'-hydroxyl of the adenosine moiety of NAD to yield NADP. The polypeptide is NAD kinase (Geobacter sulfurreducens (strain ATCC 51573 / DSM 12127 / PCA)).